The primary structure comprises 430 residues: Meiotically up-regulated gene 132 protein (430 aa).

Belongs to the UPF0300 family.

It localises to the mitochondrion. Has a role in meiosis. The polypeptide is Meiotically up-regulated gene 132 protein (mug132) (Schizosaccharomyces pombe (strain 972 / ATCC 24843) (Fission yeast)).